Consider the following 336-residue polypeptide: Nuclear envelope-associated protein 1 (336 aa).

Positions 125–261 form a coiled coil; it reads CSMLKQQLDD…RRTDQDLKKK (137 aa). Positions 240–261 match the Bipartite nuclear localization signal motif; sequence KTKELESQLEKQRRTDQDLKKK. A helical transmembrane segment spans residues 313–330; it reads FWDNSGFKIVVSMSMLML.

In terms of assembly, forms heteromers with NEAP2 and NEAP3. Interacts with SUN1; SUN2 and bZIP18.

The protein localises to the nucleus inner membrane. It localises to the nucleus. The protein resides in the nucleoplasm. The sequence is that of Nuclear envelope-associated protein 1 from Arabidopsis thaliana (Mouse-ear cress).